The chain runs to 335 residues: Biotin synthase (335 aa).

Positions 46-274 constitute a Radical SAM core domain; the sequence is YNIQLASLFS…KSKIRLSAGR (229 aa). [4Fe-4S] cluster-binding residues include Cys-61, Cys-65, and Cys-68. [2Fe-2S] cluster is bound by residues Cys-105, Cys-137, Cys-197, and Arg-269.

This sequence belongs to the radical SAM superfamily. Biotin synthase family. Homodimer. The cofactor is [4Fe-4S] cluster. [2Fe-2S] cluster is required as a cofactor.

It carries out the reaction (4R,5S)-dethiobiotin + (sulfur carrier)-SH + 2 reduced [2Fe-2S]-[ferredoxin] + 2 S-adenosyl-L-methionine = (sulfur carrier)-H + biotin + 2 5'-deoxyadenosine + 2 L-methionine + 2 oxidized [2Fe-2S]-[ferredoxin]. Its pathway is cofactor biosynthesis; biotin biosynthesis; biotin from 7,8-diaminononanoate: step 2/2. In terms of biological role, catalyzes the conversion of dethiobiotin (DTB) to biotin by the insertion of a sulfur atom into dethiobiotin via a radical-based mechanism. The sequence is that of Biotin synthase from Prochlorococcus marinus (strain MIT 9312).